The chain runs to 159 residues: Ribosomal RNA large subunit methyltransferase H (159 aa).

Residues Leu76, Gly108, and 127 to 132 each bind S-adenosyl-L-methionine; that span reads FSKMTL.

The protein belongs to the RNA methyltransferase RlmH family. In terms of assembly, homodimer.

It localises to the cytoplasm. The catalysed reaction is pseudouridine(1915) in 23S rRNA + S-adenosyl-L-methionine = N(3)-methylpseudouridine(1915) in 23S rRNA + S-adenosyl-L-homocysteine + H(+). Specifically methylates the pseudouridine at position 1915 (m3Psi1915) in 23S rRNA. This is Ribosomal RNA large subunit methyltransferase H from Bacillus anthracis (strain CDC 684 / NRRL 3495).